The chain runs to 572 residues: BOS complex subunit ncln (572 aa).

The first 35 residues, 1–35 (MFEEAGEVLENMLKVSFPLSLVLFLVLVCPLRAEA), serve as a signal peptide directing secretion. Residues 36–530 (AHEFSVYRMQ…TMNAYRVKPA (495 aa)) are Extracellular-facing. 3 N-linked (GlcNAc...) asparagine glycosylation sites follow: Asn108, Asn234, and Asn436. The chain crosses the membrane as a helical span at residues 531–551 (IFDLLLAVCIASYLGVLYLAI). The Cytoplasmic portion of the chain corresponds to 552 to 572 (QNFGLLYGFLRRVTAPRVKQH).

This sequence belongs to the nicastrin family. As to quaternary structure, component of the multi-pass translocon (MPT) complex.

It localises to the endoplasmic reticulum membrane. Its function is as follows. Component of the multi-pass translocon (MPT) complex that mediates insertion of multi-pass membrane proteins into the lipid bilayer of membranes. The MPT complex takes over after the SEC61 complex: following membrane insertion of the first few transmembrane segments of proteins by the SEC61 complex, the MPT complex occludes the lateral gate of the SEC61 complex to promote insertion of subsequent transmembrane regions. Antagonizes Nodal signaling and subsequent organization of axial structures during mesodermal patterning. Ectopic expression results in cyclopia, due to a defect in mesendoderm patterning. The sequence is that of BOS complex subunit ncln (ncln) from Danio rerio (Zebrafish).